Reading from the N-terminus, the 429-residue chain is UDP-N-acetylglucosamine 1-carboxyvinyltransferase (429 aa).

22–23 (KN) serves as a coordination point for phosphoenolpyruvate. A UDP-N-acetyl-alpha-D-glucosamine-binding site is contributed by Arg-102. Residue Cys-126 is the Proton donor of the active site. Cys-126 is modified (2-(S-cysteinyl)pyruvic acid O-phosphothioketal). UDP-N-acetyl-alpha-D-glucosamine contacts are provided by residues 131-135 (RPVDL), Asp-316, and Ile-338.

This sequence belongs to the EPSP synthase family. MurA subfamily.

It is found in the cytoplasm. It carries out the reaction phosphoenolpyruvate + UDP-N-acetyl-alpha-D-glucosamine = UDP-N-acetyl-3-O-(1-carboxyvinyl)-alpha-D-glucosamine + phosphate. It participates in cell wall biogenesis; peptidoglycan biosynthesis. Functionally, cell wall formation. Adds enolpyruvyl to UDP-N-acetylglucosamine. This chain is UDP-N-acetylglucosamine 1-carboxyvinyltransferase, found in Nitrobacter winogradskyi (strain ATCC 25391 / DSM 10237 / CIP 104748 / NCIMB 11846 / Nb-255).